A 336-amino-acid polypeptide reads, in one-letter code: tRNA N6-adenosine threonylcarbamoyltransferase (336 aa).

Fe cation contacts are provided by His114 and His118. Substrate is bound by residues 136-140 (LVSGG), Asp169, Gly182, Asp186, and Asn275. Asp301 serves as a coordination point for Fe cation.

This sequence belongs to the KAE1 / TsaD family. Fe(2+) serves as cofactor.

The protein resides in the cytoplasm. The enzyme catalyses L-threonylcarbamoyladenylate + adenosine(37) in tRNA = N(6)-L-threonylcarbamoyladenosine(37) in tRNA + AMP + H(+). In terms of biological role, required for the formation of a threonylcarbamoyl group on adenosine at position 37 (t(6)A37) in tRNAs that read codons beginning with adenine. Is involved in the transfer of the threonylcarbamoyl moiety of threonylcarbamoyl-AMP (TC-AMP) to the N6 group of A37, together with TsaE and TsaB. TsaD likely plays a direct catalytic role in this reaction. The polypeptide is tRNA N6-adenosine threonylcarbamoyltransferase (Streptococcus pneumoniae (strain CGSP14)).